The following is a 180-amino-acid chain: Large ribosomal subunit protein uL5 (180 aa).

It belongs to the universal ribosomal protein uL5 family. As to quaternary structure, part of the 50S ribosomal subunit; part of the 5S rRNA/L5/L18/L25 subcomplex. Contacts the 5S rRNA and the P site tRNA. Forms a bridge to the 30S subunit in the 70S ribosome.

Functionally, this is one of the proteins that bind and probably mediate the attachment of the 5S RNA into the large ribosomal subunit, where it forms part of the central protuberance. In the 70S ribosome it contacts protein S13 of the 30S subunit (bridge B1b), connecting the 2 subunits; this bridge is implicated in subunit movement. Contacts the P site tRNA; the 5S rRNA and some of its associated proteins might help stabilize positioning of ribosome-bound tRNAs. This is Large ribosomal subunit protein uL5 from Polynucleobacter necessarius subsp. necessarius (strain STIR1).